Here is a 518-residue protein sequence, read N- to C-terminus: MSISHPDTVLIIDFGSQVTQLIARRVRAMGVYCEIVPFQLALEGVKRLRPQAVILSGSPYSVIDDGSPRAPMEIFEIGVPVLGICYGEQVMCVQLGGKVESGHRREFGRAFLEVQEKSALFDGVWEKGSCYQVWMSHGDHVAALPEGFRVIGTSKGAPYAAIADEKRCLYAVQFHPEVVHTPDGTKLLQNFVHKISGLKGNWSMASYRDQAIATIRKKVGKSRVICGLSGGVDSSVVAVLLHEAIGDQLTCILVDHGLMRKNEAEEVLKLFRDHYNIELIHVNAANIFLNALEGETDPEKKRKTIGRLFIEVFEEETKKIEGVEFLAQGTLYPDVIESVSAIGESVTIKSHHNVGGLPERMNMKLVEPLRELFKDEVRSLGRELGLPEQFLGRHPFPGPGLAIRCPGAVTREKLEIIREADAIYLDEICKAGLYDEIWQAFVVLLPVQTVGVMGDGRTYEFVCALRAVTSVDGMTADFYPYDMEFLSKTAARIINEVRGINRVVYDITSKPPGTIEWE.

The region spanning 8-201 (TVLIIDFGSQ…VHKISGLKGN (194 aa)) is the Glutamine amidotransferase type-1 domain. Residue C85 is the Nucleophile of the active site. Active-site residues include H175 and E177. Positions 202-393 (WSMASYRDQA…LGLPEQFLGR (192 aa)) constitute a GMPS ATP-PPase domain. 229–235 (SGGVDSS) is an ATP binding site.

In terms of assembly, homodimer.

It carries out the reaction XMP + L-glutamine + ATP + H2O = GMP + L-glutamate + AMP + diphosphate + 2 H(+). It functions in the pathway purine metabolism; GMP biosynthesis; GMP from XMP (L-Gln route): step 1/1. Functionally, catalyzes the synthesis of GMP from XMP. In Bartonella quintana (strain Toulouse) (Rochalimaea quintana), this protein is GMP synthase [glutamine-hydrolyzing].